Here is a 93-residue protein sequence, read N- to C-terminus: Putative pterin-4-alpha-carbinolamine dehydratase (93 aa).

It belongs to the pterin-4-alpha-carbinolamine dehydratase family.

It carries out the reaction (4aS,6R)-4a-hydroxy-L-erythro-5,6,7,8-tetrahydrobiopterin = (6R)-L-erythro-6,7-dihydrobiopterin + H2O. The polypeptide is Putative pterin-4-alpha-carbinolamine dehydratase (Trichodesmium erythraeum (strain IMS101)).